Here is a 276-residue protein sequence, read N- to C-terminus: 4-diphosphocytidyl-2-C-methyl-D-erythritol kinase (276 aa).

Lysine 13 is a catalytic residue. 94 to 104 is an ATP binding site; the sequence is PHAGGIGGGSA. Aspartate 131 is a catalytic residue.

The protein belongs to the GHMP kinase family. IspE subfamily.

It catalyses the reaction 4-CDP-2-C-methyl-D-erythritol + ATP = 4-CDP-2-C-methyl-D-erythritol 2-phosphate + ADP + H(+). Its pathway is isoprenoid biosynthesis; isopentenyl diphosphate biosynthesis via DXP pathway; isopentenyl diphosphate from 1-deoxy-D-xylulose 5-phosphate: step 3/6. Its function is as follows. Catalyzes the phosphorylation of the position 2 hydroxy group of 4-diphosphocytidyl-2C-methyl-D-erythritol. This Jannaschia sp. (strain CCS1) protein is 4-diphosphocytidyl-2-C-methyl-D-erythritol kinase.